The sequence spans 452 residues: UDP-N-acetylmuramate--L-alanine ligase (452 aa).

An ATP-binding site is contributed by 119–125 (GAHGKTS).

Belongs to the MurCDEF family.

The protein resides in the cytoplasm. It catalyses the reaction UDP-N-acetyl-alpha-D-muramate + L-alanine + ATP = UDP-N-acetyl-alpha-D-muramoyl-L-alanine + ADP + phosphate + H(+). It participates in cell wall biogenesis; peptidoglycan biosynthesis. Cell wall formation. The chain is UDP-N-acetylmuramate--L-alanine ligase from Streptococcus mutans serotype c (strain ATCC 700610 / UA159).